Here is a 439-residue protein sequence, read N- to C-terminus: uncharacterized protein (439 aa).

28 to 35 (GRRRIGKT) is an ATP binding site.

This is an uncharacterized protein from Methanocaldococcus jannaschii (strain ATCC 43067 / DSM 2661 / JAL-1 / JCM 10045 / NBRC 100440) (Methanococcus jannaschii).